The following is a 285-amino-acid chain: Bis(5'-nucleosyl)-tetraphosphatase, symmetrical (285 aa).

Belongs to the Ap4A hydrolase family.

It carries out the reaction P(1),P(4)-bis(5'-adenosyl) tetraphosphate + H2O = 2 ADP + 2 H(+). Its function is as follows. Hydrolyzes diadenosine 5',5'''-P1,P4-tetraphosphate to yield ADP. In Colwellia psychrerythraea (strain 34H / ATCC BAA-681) (Vibrio psychroerythus), this protein is Bis(5'-nucleosyl)-tetraphosphatase, symmetrical.